The sequence spans 234 residues: Cell adhesion molecule CEACAM15 (234 aa).

Residues 1-32 (MGAETMESPSLFLCKGLLLTASLLICWNWSTA) form the signal peptide. Residues Asn-28, Asn-75, Asn-151, and Asn-184 are each glycosylated (N-linked (GlcNAc...) asparagine). Residues 146 to 226 (PYLQLNHTRL…NSFSSKKSYP (81 aa)) enclose the Ig-like C2-type domain. Cys-165 and Cys-213 are disulfide-bonded.

This sequence belongs to the immunoglobulin superfamily. CEA family. Detected in placenta.

The polypeptide is Cell adhesion molecule CEACAM15 (Mus musculus (Mouse)).